Consider the following 750-residue polypeptide: Photosystem I P700 chlorophyll a apoprotein A1 (750 aa).

Helical transmembrane passes span 70-93 (VFSA…FHGA), 156-179 (LYCT…FHYH), 195-219 (LNHH…HVSL), 291-309 (TAHH…GHMY), 346-369 (WHAQ…HHMY), 385-411 (LSLF…IFMV), 433-455 (AIVS…LYIH), and 531-549 (FLVH…LILL). Residues Cys-573 and Cys-582 each coordinate [4Fe-4S] cluster. Transmembrane regions (helical) follow at residues 589 to 610 (HVFL…HFSW) and 664 to 686 (LSAY…MFLF). His-675 provides a ligand contact to chlorophyll a'. The chlorophyll a site is built by Met-683 and Tyr-691. Trp-692 is a binding site for phylloquinone. Residues 724–744 (AVGVAHYLLGGIVTTWAFFLA) traverse the membrane as a helical segment.

The protein belongs to the PsaA/PsaB family. As to quaternary structure, the PsaA/B heterodimer binds the P700 chlorophyll special pair and subsequent electron acceptors. PSI consists of a core antenna complex that captures photons, and an electron transfer chain that converts photonic excitation into a charge separation. The eukaryotic PSI reaction center is composed of at least 11 subunits. P700 is a chlorophyll a/chlorophyll a' dimer, A0 is one or more chlorophyll a, A1 is one or both phylloquinones and FX is a shared 4Fe-4S iron-sulfur center. is required as a cofactor.

The protein localises to the plastid. Its subcellular location is the chloroplast thylakoid membrane. The enzyme catalyses reduced [plastocyanin] + hnu + oxidized [2Fe-2S]-[ferredoxin] = oxidized [plastocyanin] + reduced [2Fe-2S]-[ferredoxin]. Its function is as follows. PsaA and PsaB bind P700, the primary electron donor of photosystem I (PSI), as well as the electron acceptors A0, A1 and FX. PSI is a plastocyanin-ferredoxin oxidoreductase, converting photonic excitation into a charge separation, which transfers an electron from the donor P700 chlorophyll pair to the spectroscopically characterized acceptors A0, A1, FX, FA and FB in turn. Oxidized P700 is reduced on the lumenal side of the thylakoid membrane by plastocyanin. The polypeptide is Photosystem I P700 chlorophyll a apoprotein A1 (Pinus koraiensis (Korean pine)).